A 512-amino-acid polypeptide reads, in one-letter code: Allene oxide synthase 1, chloroplastic (512 aa).

A chloroplast-targeting transit peptide spans 1–25 (MATAAACISFASPSPARVVIRRQTR). The disordered stretch occupies residues 23-43 (QTRASASASATDRQEVVSPKR). Residues K127, H158, and K162 each contribute to the heme b site. (13S)-hydroperoxy-(9Z,11E,15Z)-octadecatrienoate is bound at residue N315. Heme b contacts are provided by K463 and C465.

Belongs to the cytochrome P450 family. It depends on heme b as a cofactor. As to expression, expressed in coleoptiles, and at lower level in leaves of dark-grown seedlings.

It is found in the plastid. The protein resides in the chloroplast membrane. The enzyme catalyses (13S)-hydroperoxy-(9Z,11E,15Z)-octadecatrienoate = (9Z,13S,15Z)-12,13-epoxyoctadeca-9,11,15-trienoate + H2O. Its pathway is lipid metabolism; oxylipin biosynthesis. Its function is as follows. Involved in the biosynthesis of jasmonic acid, a growth regulator that is implicated also as a signaling molecule in plant defense. Converts 13-hydroperoxylinolenic acid to 12,13-epoxylinolenic acid. The sequence is that of Allene oxide synthase 1, chloroplastic (CYP74A1) from Oryza sativa subsp. japonica (Rice).